Reading from the N-terminus, the 253-residue chain is Large ribosomal subunit protein bL28m (253 aa).

A mitochondrion-targeting transit peptide spans Met1–Lys55.

The protein belongs to the bacterial ribosomal protein bL28 family. Component of the mitochondrial ribosome large subunit (39S) which comprises a 16S rRNA and about 50 distinct proteins.

It localises to the mitochondrion. This chain is Large ribosomal subunit protein bL28m (mrpl28), found in Xenopus laevis (African clawed frog).